The sequence spans 225 residues: Phosphoserine phosphatase (225 aa).

Met1 carries the post-translational modification N-acetylmethionine. Asp20 (nucleophile) is an active-site residue. Asp20 and Asp22 together coordinate Mg(2+). 20–22 (DVD) contributes to the L-serine binding site. Asp22 (proton donor) is an active-site residue. Residue Met52 participates in O-phospho-L-serine binding. Gly53 contacts phosphate. L-serine-binding positions include 109-111 (SGG) and Lys158. Residues 109–111 (SGG) and Lys158 contribute to the O-phospho-L-serine site. Residue Asp179 participates in Mg(2+) binding. Position 182 (Thr182) interacts with O-phospho-L-serine. Thr182 provides a ligand contact to phosphate.

It belongs to the HAD-like hydrolase superfamily. SerB family. In terms of assembly, homodimer. The cofactor is Mg(2+).

It localises to the cytoplasm. It is found in the cytosol. The enzyme catalyses O-phospho-L-serine + H2O = L-serine + phosphate. The catalysed reaction is O-phospho-D-serine + H2O = D-serine + phosphate. It participates in amino-acid biosynthesis; L-serine biosynthesis; L-serine from 3-phospho-D-glycerate: step 3/3. Catalyzes the last irreversible step in the biosynthesis of L-serine from carbohydrates, the dephosphorylation of O-phospho-L-serine to L-serine. L-serine can then be used in protein synthesis, to produce other amino acids, in nucleotide metabolism or in glutathione synthesis, or can be racemized to D-serine, a neuromodulator. May also act on O-phospho-D-serine. The chain is Phosphoserine phosphatase from Mus musculus (Mouse).